Reading from the N-terminus, the 286-residue chain is ATP synthase gamma chain (286 aa).

It belongs to the ATPase gamma chain family. As to quaternary structure, F-type ATPases have 2 components, CF(1) - the catalytic core - and CF(0) - the membrane proton channel. CF(1) has five subunits: alpha(3), beta(3), gamma(1), delta(1), epsilon(1). CF(0) has three main subunits: a, b and c.

It is found in the cell inner membrane. Produces ATP from ADP in the presence of a proton gradient across the membrane. The gamma chain is believed to be important in regulating ATPase activity and the flow of protons through the CF(0) complex. In Teredinibacter turnerae (strain ATCC 39867 / T7901), this protein is ATP synthase gamma chain.